Here is a 458-residue protein sequence, read N- to C-terminus: Retinoic acid receptor RXR-beta (458 aa).

Residues 1 to 17 show a composition bias toward basic and acidic residues; the sequence is GEAGRDGMGDTGRDSRS. A disordered region spans residues 1–105; the sequence is GEAGRDGMGD…GGSGPPEDVK (105 aa). Residues 1 to 129 form a modulating region; sequence GEAGRDGMGD…PGGPGAGKRL (129 aa). Over residues 18–31 the composition is skewed to low complexity; sequence PDSSSPNPLSQGIP. The span at 32-56 shows a compositional bias: pro residues; the sequence is PSSPPGPPHTPSAPPPPMPPPPLGS. Low complexity predominate over residues 57–68; sequence PFPVISSSMGSP. Over residues 69-78 the composition is skewed to pro residues; sequence GLPPPAPPGF. 2 NR C4-type zinc fingers span residues 130–150 and 166–190; these read CAIC…CEGC and CRDN…YQKC. Residues 130–195 constitute a DNA-binding region (nuclear receptor); sequence CAICGDRSSG…RYQKCLATGM (66 aa). The interval 196–220 is hinge; the sequence is KREAVQEERQRGKDKDGDGDGAGGA. Basic and acidic residues predominate over residues 201–213; sequence QEERQRGKDKDGD. 2 disordered regions span residues 201–223 and 238–261; these read QEER…APEE and QKSD…NDPV. The NR LBD domain maps to 221-454; the sequence is PEEMPVDRIL…TFLMEMLEAP (234 aa). Residues 245 to 255 show a composition bias toward gly residues; sequence EGPGATGGGGS.

Belongs to the nuclear hormone receptor family. NR2 subfamily. In terms of assembly, homodimer (in vitro). Heterodimer with other retinoic acid receptor family members. Binds DNA preferentially as a RAR/RXR heterodimer. Interacts with NR1H3. Interacts with AKAP13. Expressed in the adrenal gland with main expression in the zona fasciculata (at protein level).

The protein localises to the nucleus. Its subcellular location is the cytoplasm. In terms of biological role, receptor for retinoic acid. Retinoic acid receptors bind as heterodimers to their target response elements in response to their ligands, all-trans or 9-cis retinoic acid, and regulate gene expression in various biological processes. The RAR/RXR heterodimers bind to the retinoic acid response elements (RARE). This is Retinoic acid receptor RXR-beta (Rxrb) from Rattus norvegicus (Rat).